A 204-amino-acid polypeptide reads, in one-letter code: Holliday junction branch migration complex subunit RuvA (204 aa).

Residues 1–64 (MIGRLQGILL…EDAHLLFGFA (64 aa)) are domain I. Residues 65 to 143 (QKTDRTLFRE…GVKQSDFFVE (79 aa)) form a domain II region. The flexible linker stretch occupies residues 144–155 (STHIPLSPSIES). A domain III region spans residues 156–204 (HSESSSDEAISALIALGYKPVEAEKMVKRVAKPELTSEQVIREALKAAL).

Belongs to the RuvA family. As to quaternary structure, homotetramer. Forms an RuvA(8)-RuvB(12)-Holliday junction (HJ) complex. HJ DNA is sandwiched between 2 RuvA tetramers; dsDNA enters through RuvA and exits via RuvB. An RuvB hexamer assembles on each DNA strand where it exits the tetramer. Each RuvB hexamer is contacted by two RuvA subunits (via domain III) on 2 adjacent RuvB subunits; this complex drives branch migration. In the full resolvosome a probable DNA-RuvA(4)-RuvB(12)-RuvC(2) complex forms which resolves the HJ.

Its subcellular location is the cytoplasm. In terms of biological role, the RuvA-RuvB-RuvC complex processes Holliday junction (HJ) DNA during genetic recombination and DNA repair, while the RuvA-RuvB complex plays an important role in the rescue of blocked DNA replication forks via replication fork reversal (RFR). RuvA specifically binds to HJ cruciform DNA, conferring on it an open structure. The RuvB hexamer acts as an ATP-dependent pump, pulling dsDNA into and through the RuvAB complex. HJ branch migration allows RuvC to scan DNA until it finds its consensus sequence, where it cleaves and resolves the cruciform DNA. The polypeptide is Holliday junction branch migration complex subunit RuvA (Haemophilus influenzae (strain PittEE)).